The primary structure comprises 397 residues: Acetate kinase (397 aa).

Position 7 (Asn-7) interacts with Mg(2+). Lys-14 is a binding site for ATP. Residue Arg-90 participates in substrate binding. The active-site Proton donor/acceptor is Asp-147. ATP is bound by residues 207 to 211 (HLGNG), 282 to 284 (DFR), and 330 to 334 (GLGEN). Glu-383 is a binding site for Mg(2+).

The protein belongs to the acetokinase family. In terms of assembly, homodimer. The cofactor is Mg(2+). Requires Mn(2+) as cofactor.

Its subcellular location is the cytoplasm. It carries out the reaction acetate + ATP = acetyl phosphate + ADP. The protein operates within metabolic intermediate biosynthesis; acetyl-CoA biosynthesis; acetyl-CoA from acetate: step 1/2. Its function is as follows. Catalyzes the formation of acetyl phosphate from acetate and ATP. Can also catalyze the reverse reaction. This Clostridium botulinum (strain Langeland / NCTC 10281 / Type F) protein is Acetate kinase.